Consider the following 300-residue polypeptide: Protoheme IX farnesyltransferase 1 (300 aa).

9 helical membrane-spanning segments follow: residues 28–48, 54–74, 100–120, 122–142, 149–169, 176–196, 222–242, 243–263, and 280–300; these read VVAL…PTIL, VAGL…NHLI, ALLF…VFTN, LTAW…TAYL, NIVI…TAVT, ALLL…ALAI, CILL…LVGM, SGPL…YKAW, and FSIY…YLWA.

Belongs to the UbiA prenyltransferase family. Protoheme IX farnesyltransferase subfamily.

Its subcellular location is the cell inner membrane. The catalysed reaction is heme b + (2E,6E)-farnesyl diphosphate + H2O = Fe(II)-heme o + diphosphate. Its pathway is porphyrin-containing compound metabolism; heme O biosynthesis; heme O from protoheme: step 1/1. Converts heme B (protoheme IX) to heme O by substitution of the vinyl group on carbon 2 of heme B porphyrin ring with a hydroxyethyl farnesyl side group. The polypeptide is Protoheme IX farnesyltransferase 1 (Shewanella sp. (strain MR-4)).